The following is a 349-amino-acid chain: RxLR effector protein CRE15 (349 aa).

The first 33 residues, 1–33 (MITFKRLSSARWGALLTSIAVLFFLAITKGADA), serve as a signal peptide directing secretion. A RxLR-dEER motif is present at residues 46 to 62 (RRLRTTTADAYYASEDR).

This sequence belongs to the RxLR effector family. Interacts directly with the potato ortholog of vascular highway 1 (VH1)-interacting kinase (VIK), encoding a predicted MEK kinase (MAP3K).

It is found in the secreted. It localises to the host cell membrane. Functionally, effector that promotes P.infestans virulence in Nicotiana benthamiana and potato. Attenuates cell death triggered by the pathogen-associated molecular pattern infestin 1 (INF1), indicating that the effector suppresses pattern-triggered immunity. However, it does not attenuate cell death triggered by a range of resistance proteins, suggesting that it specifically suppresses INF1-triggered cell death (ICD). Targets host MAP3K VIK in order to utilize or promote its ability to negatively regulate immunity. This is RxLR effector protein CRE15 from Phytophthora infestans (strain T30-4) (Potato late blight agent).